The sequence spans 911 residues: Viral IRF4-like protein (911 aa).

The IRF tryptophan pentad repeat DNA-binding region spans 7–114 (SEWATLWIID…GSYVVWQLVR (108 aa)). Disordered stretches follow at residues 147–184 (TTAT…PRKS), 211–302 (ASTS…SRLP), 494–537 (GGAP…PYVC), and 681–727 (ELQE…FFDP). Positions 211 to 221 (ASTSGMGSSGT) are enriched in low complexity. 2 stretches are compositionally biased toward polar residues: residues 222 to 231 (RQVTQASSFT) and 495 to 505 (GAPNQGLSHTQ). A compositionally biased stretch (basic residues) spans 697 to 710 (RRPRSRSPHGRRTP).

This sequence belongs to the IRF family. In terms of assembly, interacts with host MDM2; this interaction facilitates the proteasomal degradation of TP53/p53. Interacts with host IRF7; this interaction prevents IRF7 dimerization and subsequent activation.

The protein resides in the host nucleus. Plays a role in host cell apoptosis modulation by promoting TP53/p53 ubiquitination and subsequent degradation and thus down-regulating TP53/p53-mediated apoptosis. Works as a potential viral transcription factor to modulate host gene expression to build favorable environments for the viral lytic life cycle and greatly accelerates the induction of an immediate early gene RTA, early genes ORF36 and ORF57, late genes ORF25 and ORF64, and latent genes LANA1 and v-IRF3. Inhibits host interferon-alpha production by interacting with host IRF7 and preventing IRF7 dimerization. The sequence is that of Viral IRF4-like protein (vIRF-4) from Homo sapiens (Human).